A 92-amino-acid chain; its full sequence is Transcription factor ILI6 (92 aa).

The tract at residues 1–20 (MSSRRSRSRQSGSSRITDEQ) is disordered. In terms of domain architecture, bHLH spans 5-59 (RSRSRQSGSSRITDEQISDLVSKLQDLLPEARLRSNDRVPSSRVLQETCNYIRSL).

This sequence belongs to the bHLH protein family. In terms of assembly, interacts with APG.

Its subcellular location is the nucleus. In terms of biological role, atypical and probable non DNA-binding bHLH transcription factor that acts as a positive regulator of grain size. Binds the transcription repressor APG and forms a heterodimer of antagonistic bHLH transcription factors that regulates grain length and weight by controlling cell elongation in lemma and palea. May be involved in the control of lamina inclination through brassinosteroid signaling pathway. The chain is Transcription factor ILI6 (ILI6) from Oryza sativa subsp. indica (Rice).